Reading from the N-terminus, the 202-residue chain is Alpha-1-acid glycoprotein (202 aa).

A signal peptide spans 1–18 (MALLWALAVLSHLPLLDA). Asparagine 34, asparagine 57, asparagine 94, asparagine 104, and asparagine 136 each carry an N-linked (GlcNAc...) asparagine glycan. Residues cysteine 91 and cysteine 184 are joined by a disulfide bond.

Belongs to the calycin superfamily. Lipocalin family.

The protein resides in the secreted. Functionally, functions as a transport protein in the blood stream. Binds various ligands in the interior of its beta-barrel domain. Appears to function in modulating the activity of the immune system during the acute-phase reaction. This is Alpha-1-acid glycoprotein (ORM1) from Bos taurus (Bovine).